Reading from the N-terminus, the 123-residue chain is Large ribosomal subunit protein bL12 (123 aa).

The tract at residues 96-123 is disordered; the sequence is NVKEGVSKEEAEGLKKSLEEAGATVELK. The segment covering 100 to 114 has biased composition (basic and acidic residues); that stretch reads GVSKEEAEGLKKSLE.

Belongs to the bacterial ribosomal protein bL12 family. In terms of assembly, homodimer. Part of the ribosomal stalk of the 50S ribosomal subunit. Forms a multimeric L10(L12)X complex, where L10 forms an elongated spine to which 2 to 4 L12 dimers bind in a sequential fashion. Binds GTP-bound translation factors.

Forms part of the ribosomal stalk which helps the ribosome interact with GTP-bound translation factors. Is thus essential for accurate translation. The polypeptide is Large ribosomal subunit protein bL12 (Flavobacterium johnsoniae (strain ATCC 17061 / DSM 2064 / JCM 8514 / BCRC 14874 / CCUG 350202 / NBRC 14942 / NCIMB 11054 / UW101) (Cytophaga johnsonae)).